Reading from the N-terminus, the 218-residue chain is 4-coumaroyl-homoserine lactone synthase (218 aa).

The protein belongs to the autoinducer synthase family.

The enzyme catalyses 4-coumaroyl-CoA + S-adenosyl-L-methionine = N-(4-coumaroyl)-L-homoserine lactone + S-methyl-5'-thioadenosine + CoA + H(+). Its function is as follows. Catalyzes the synthesis of 4-coumaroyl-homoserine lactone, a quorum-sensing (QS) autoinducer molecule which binds to RpaR transcriptional regulator to regulate expression of QS-dependent genes. The sequence is that of 4-coumaroyl-homoserine lactone synthase from Rhodopseudomonas palustris (strain ATCC BAA-98 / CGA009).